The primary structure comprises 169 residues: UPF0316 protein Dde_2502 (169 aa).

A run of 3 helical transmembrane segments spans residues 1–21, 38–58, and 68–88; these read MITAASLLTALAVFIARLCDV, LAFSVAFFEAVIWVYAVSRVI, and LAFALGFASGTYAGITLEGVF.

The protein belongs to the UPF0316 family.

The protein localises to the cell membrane. In Oleidesulfovibrio alaskensis (strain ATCC BAA-1058 / DSM 17464 / G20) (Desulfovibrio alaskensis), this protein is UPF0316 protein Dde_2502.